Here is a 438-residue protein sequence, read N- to C-terminus: Tyrosine--tRNA ligase (438 aa).

Tyr-47 contributes to the L-tyrosine binding site. Positions Pro-52–Gly-61 match the 'HIGH' region motif. L-tyrosine-binding residues include Tyr-183 and Gln-187. A 'KMSKS' region motif is present at residues Lys-243–Thr-247. Lys-246 is an ATP binding site. The S4 RNA-binding domain occupies Leu-370 to Ile-436.

It belongs to the class-I aminoacyl-tRNA synthetase family. TyrS type 1 subfamily. Homodimer.

The protein resides in the cytoplasm. The catalysed reaction is tRNA(Tyr) + L-tyrosine + ATP = L-tyrosyl-tRNA(Tyr) + AMP + diphosphate + H(+). Functionally, catalyzes the attachment of tyrosine to tRNA(Tyr) in a two-step reaction: tyrosine is first activated by ATP to form Tyr-AMP and then transferred to the acceptor end of tRNA(Tyr). This Rhodopirellula baltica (strain DSM 10527 / NCIMB 13988 / SH1) protein is Tyrosine--tRNA ligase.